The sequence spans 122 residues: Large ribosomal subunit protein uL29 (122 aa).

Residue S12 is modified to Phosphoserine.

It belongs to the universal ribosomal protein uL29 family. In terms of assembly, component of the large ribosomal subunit (LSU). Mature yeast ribosomes consist of a small (40S) and a large (60S) subunit. The 40S small subunit contains 1 molecule of ribosomal RNA (18S rRNA) and at least 33 different proteins. The large 60S subunit contains 3 rRNA molecules (25S, 5.8S and 5S rRNA) and at least 46 different proteins. uL29 is associated with the polypeptide exit tunnel.

It is found in the cytoplasm. The protein resides in the nucleus. The protein localises to the nucleolus. Its function is as follows. Component of the ribosome, a large ribonucleoprotein complex responsible for the synthesis of proteins in the cell. The small ribosomal subunit (SSU) binds messenger RNAs (mRNAs) and translates the encoded message by selecting cognate aminoacyl-transfer RNA (tRNA) molecules. The large subunit (LSU) contains the ribosomal catalytic site termed the peptidyl transferase center (PTC), which catalyzes the formation of peptide bonds, thereby polymerizing the amino acids delivered by tRNAs into a polypeptide chain. The nascent polypeptides leave the ribosome through a tunnel in the LSU and interact with protein factors that function in enzymatic processing, targeting, and the membrane insertion of nascent chains at the exit of the ribosomal tunnel. The protein is Large ribosomal subunit protein uL29 (rpl35) of Schizosaccharomyces pombe (strain 972 / ATCC 24843) (Fission yeast).